The following is a 143-amino-acid chain: uncharacterized protein (143 aa).

A signal peptide spans 1-27; the sequence is MSDEIARLVADVFELAGLLRRSGEVVA.

This is an uncharacterized protein from Mycobacterium tuberculosis (strain CDC 1551 / Oshkosh).